The sequence spans 848 residues: ATP-dependent Clp protease ATP-binding subunit ClpC1 (848 aa).

The 143-residue stretch at 2 to 144 folds into the Clp R domain; the sequence is FERFTDRARR…RQQVIQLLSG (143 aa). Repeat regions lie at residues 5–70 and 80–144; these read FTDR…IGQG and FTPR…LLSG. An i region spans residues 171 to 418; the sequence is LDQFGRNLTA…RMRIRRMTAP (248 aa). 216 to 223 serves as a coordination point for ATP; it reads GEPGVGKT. In terms of domain architecture, UVR spans 425-460; that stretch reads DEKIAEARREKESAIDAQDFEKAASLRDREKTLVAQ. Positions 479 to 670 are II; it reads VDDEQIAEVL…VLIFTSNLGT (192 aa). 553-560 lines the ATP pocket; it reads GPSGVGKT. A disordered region spans residues 821 to 848; the sequence is TGTRKPPAEPDLAKAGAHSAGGPEPAAR.

It belongs to the ClpA/ClpB family. ClpC subfamily.

Its function is as follows. ATP-dependent specificity component of the Clp protease. It directs the protease to specific substrates. Can perform chaperone functions in the absence of ClpP. Degrades anti-sigma-E factor RseA in the presence of ClpP2. This Mycobacterium tuberculosis (strain ATCC 25618 / H37Rv) protein is ATP-dependent Clp protease ATP-binding subunit ClpC1 (clpC1).